Here is a 965-residue protein sequence, read N- to C-terminus: UvrABC system protein A (965 aa).

Residue 32–39 participates in ATP binding; sequence GLSGSGKS. The segment at 254 to 281 adopts a C4-type zinc-finger fold; that stretch reads CPVCDYSLPELEPRLFSFNAPMGACPAC. ABC transporter domains lie at 311–588 and 608–937; these read WDRR…PRSL and PNAT…HFLA. 641–648 is a binding site for ATP; it reads GVSGSGKS. Residues 740–766 form a C4-type zinc finger; it reads CEACEGDGLIKVEMHFLPDVYVPCDIC.

It belongs to the ABC transporter superfamily. UvrA family. Forms a heterotetramer with UvrB during the search for lesions.

It is found in the cytoplasm. Its function is as follows. The UvrABC repair system catalyzes the recognition and processing of DNA lesions. UvrA is an ATPase and a DNA-binding protein. A damage recognition complex composed of 2 UvrA and 2 UvrB subunits scans DNA for abnormalities. When the presence of a lesion has been verified by UvrB, the UvrA molecules dissociate. This Xylella fastidiosa (strain Temecula1 / ATCC 700964) protein is UvrABC system protein A.